Reading from the N-terminus, the 412-residue chain is MSYITKQDKVIAEAIEREFQRQNSNIELIASENFVSEAVMEAQGSVLTNKYAEGYPGRRYYGGCEFVDVTESIAIDRAKALFGAEHVNVQPHSGSQANMAVYLVALGMGDTVLGMNLSHGGHLTHGAPVNFSGKFYNFVEYGVDKDTERINYDEVRKLALEHKPKLIVAGASAYSRTIDFKKFKEIADEVNAKLMVDMAHIAGLVAAGLHPNPVEYADFVTTTTHKTLRGPRGGMILCKEEYKKDIDKTIFPGIQGGPLEHVIAAKAVAFGEALENNFKTYQQQVVKNAKVLAEALINEGFRIVSGGTDNHLVAVDVKGSIGLTGKEAEETLDSVGITCNKNTIPFDQEKPFVTSGIRLGTPAATTRGFDEKAFEEVAKIISLALKNSKDEEKLQQAKERVAKLTAEYPLYQ.

(6S)-5,6,7,8-tetrahydrofolate is bound by residues Leu-117 and 121 to 123 (GHL). Lys-226 is modified (N6-(pyridoxal phosphate)lysine).

It belongs to the SHMT family. In terms of assembly, homodimer. It depends on pyridoxal 5'-phosphate as a cofactor.

The protein localises to the cytoplasm. The catalysed reaction is (6R)-5,10-methylene-5,6,7,8-tetrahydrofolate + glycine + H2O = (6S)-5,6,7,8-tetrahydrofolate + L-serine. The protein operates within one-carbon metabolism; tetrahydrofolate interconversion. It functions in the pathway amino-acid biosynthesis; glycine biosynthesis; glycine from L-serine: step 1/1. Functionally, catalyzes the reversible interconversion of serine and glycine with tetrahydrofolate (THF) serving as the one-carbon carrier. This reaction serves as the major source of one-carbon groups required for the biosynthesis of purines, thymidylate, methionine, and other important biomolecules. Also exhibits THF-independent aldolase activity toward beta-hydroxyamino acids, producing glycine and aldehydes, via a retro-aldol mechanism. The sequence is that of Serine hydroxymethyltransferase from Staphylococcus aureus (strain USA300).